The sequence spans 327 residues: Ubiquinone biosynthesis protein COQ4, mitochondrial (327 aa).

4 residues coordinate Zn(2+): histidine 208, aspartate 209, histidine 212, and glutamate 224.

The protein belongs to the COQ4 family. Component of a multi-subunit COQ enzyme complex, composed of at least COQ3, COQ4, COQ5, COQ6, COQ7 and COQ9. The cofactor is Zn(2+).

It is found in the mitochondrion inner membrane. It carries out the reaction a 4-hydroxy-3-methoxy-5-(all-trans-polyprenyl)benzoate + H(+) = a 2-methoxy-6-(all-trans-polyprenyl)phenol + CO2. The protein operates within cofactor biosynthesis; ubiquinone biosynthesis. Functionally, lyase that catalyzes the C1-decarboxylation of 4-hydroxy-3-methoxy-5-(all-trans-polyprenyl)benzoic acid into 2-methoxy-6-(all-trans-polyprenyl)phenol during ubiquinone biosynthesis. In Lachancea thermotolerans (strain ATCC 56472 / CBS 6340 / NRRL Y-8284) (Yeast), this protein is Ubiquinone biosynthesis protein COQ4, mitochondrial.